A 274-amino-acid chain; its full sequence is Dermonecrotic toxin SdSicTox-betaIIB1biii (274 aa).

Histidine 5 is a catalytic residue. Residues glutamate 25 and aspartate 27 each contribute to the Mg(2+) site. The active-site Nucleophile is the histidine 41. 2 disulfides stabilise this stretch: cysteine 45–cysteine 51 and cysteine 47–cysteine 190. Aspartate 85 is a binding site for Mg(2+).

Belongs to the arthropod phospholipase D family. Class II subfamily. The cofactor is Mg(2+). As to expression, expressed by the venom gland.

The protein resides in the secreted. The enzyme catalyses an N-(acyl)-sphingosylphosphocholine = an N-(acyl)-sphingosyl-1,3-cyclic phosphate + choline. The catalysed reaction is an N-(acyl)-sphingosylphosphoethanolamine = an N-(acyl)-sphingosyl-1,3-cyclic phosphate + ethanolamine. It carries out the reaction a 1-acyl-sn-glycero-3-phosphocholine = a 1-acyl-sn-glycero-2,3-cyclic phosphate + choline. It catalyses the reaction a 1-acyl-sn-glycero-3-phosphoethanolamine = a 1-acyl-sn-glycero-2,3-cyclic phosphate + ethanolamine. Its function is as follows. Dermonecrotic toxins cleave the phosphodiester linkage between the phosphate and headgroup of certain phospholipids (sphingolipid and lysolipid substrates), forming an alcohol (often choline) and a cyclic phosphate. This toxin acts on sphingomyelin (SM). It may also act on ceramide phosphoethanolamine (CPE), lysophosphatidylcholine (LPC) and lysophosphatidylethanolamine (LPE), but not on lysophosphatidylserine (LPS), and lysophosphatidylglycerol (LPG). It acts by transphosphatidylation, releasing exclusively cyclic phosphate products as second products. Induces dermonecrosis, hemolysis, increased vascular permeability, edema, inflammatory response, and platelet aggregation. This chain is Dermonecrotic toxin SdSicTox-betaIIB1biii, found in Sicarius cf. damarensis (strain GJB-2008) (Six-eyed sand spider).